A 410-amino-acid polypeptide reads, in one-letter code: Transforming growth factor beta-3 proprotein (410 aa).

The N-terminal stretch at 1 to 23 (MHLQRALVVLALLNLATISLSLS) is a signal peptide. N-linked (GlcNAc...) asparagine glycosylation is found at N72, N133, and N140. A Cell attachment site motif is present at residues 259–261 (RGD). Residue Q291 is modified to N5-methylglutamine. Disulfide bonds link C305–C314, C313–C376, C342–C407, and C346–C409.

Belongs to the TGF-beta family. As to quaternary structure, interacts with ASPN. Latency-associated peptide: Homodimer; disulfide-linked. Latency-associated peptide: Interacts with Transforming growth factor beta-3 (TGF-beta-3) chain; interaction is non-covalent and maintains (TGF-beta-3) in a latent state. Latency-associated peptide: Interacts with LRRC32/GARP; leading to regulate activation of TGF-beta-3 and promote epithelial fusion during palate development. Latency-associated peptide: Interacts (via cell attachment site) with integrins, leading to release of the active TGF-beta-3. Transforming growth factor beta-3: Homodimer; disulfide-linked. Transforming growth factor beta-3: Interacts with TGF-beta receptors (TGFBR1 and TGFBR2), leading to signal transduction. Transforming growth factor beta-3 proprotein: The precursor proprotein is cleaved in the Golgi apparatus to form Transforming growth factor beta-3 (TGF-beta-3) and Latency-associated peptide (LAP) chains, which remain non-covalently linked, rendering TGF-beta-3 inactive. Post-translationally, methylated at Gln-291 by N6AMT1. As to expression, expressed in mammary glands with a slight increase in expression prior to lactation and again increasing at the onset of involution, expression peaks at day 3 of involution.

It is found in the secreted. The protein resides in the extracellular space. It localises to the extracellular matrix. Functionally, transforming growth factor beta-3 proprotein: Precursor of the Latency-associated peptide (LAP) and Transforming growth factor beta-3 (TGF-beta-3) chains, which constitute the regulatory and active subunit of TGF-beta-3, respectively. In terms of biological role, required to maintain the Transforming growth factor beta-3 (TGF-beta-3) chain in a latent state during storage in extracellular matrix. Associates non-covalently with TGF-beta-3 and regulates its activation via interaction with 'milieu molecules', such as LTBP1 and LRRC32/GARP, that control activation of TGF-beta-3. Interaction with integrins results in distortion of the Latency-associated peptide chain and subsequent release of the active TGF-beta-3. Transforming growth factor beta-3: Multifunctional protein that regulates embryogenesis and cell differentiation and is required in various processes such as secondary palate development. Activation into mature form follows different steps: following cleavage of the proprotein in the Golgi apparatus, Latency-associated peptide (LAP) and Transforming growth factor beta-3 (TGF-beta-3) chains remain non-covalently linked rendering TGF-beta-3 inactive during storage in extracellular matrix. At the same time, LAP chain interacts with 'milieu molecules', such as LTBP1 and LRRC32/GARP that control activation of TGF-beta-3 and maintain it in a latent state during storage in extracellular milieus. TGF-beta-3 is released from LAP by integrins: integrin-binding results in distortion of the LAP chain and subsequent release of the active TGF-beta-3. Once activated following release of LAP, TGF-beta-3 acts by binding to TGF-beta receptors (TGFBR1 and TGFBR2), which transduce signal. The polypeptide is Transforming growth factor beta-3 proprotein (Mus musculus (Mouse)).